A 142-amino-acid polypeptide reads, in one-letter code: Large ribosomal subunit protein uL11 (142 aa).

The protein belongs to the universal ribosomal protein uL11 family. Part of the ribosomal stalk of the 50S ribosomal subunit. Interacts with L10 and the large rRNA to form the base of the stalk. L10 forms an elongated spine to which L12 dimers bind in a sequential fashion forming a multimeric L10(L12)X complex. One or more lysine residues are methylated.

Functionally, forms part of the ribosomal stalk which helps the ribosome interact with GTP-bound translation factors. This chain is Large ribosomal subunit protein uL11, found in Hahella chejuensis (strain KCTC 2396).